The chain runs to 54 residues: Potassium channel toxin alpha-KTx 14.3 (54 aa).

Residues 1 to 23 (MKIFFAILLILAVCSMAIWTVNG) form the signal peptide.

It belongs to the short scorpion toxin superfamily. Potassium channel inhibitor family. Alpha-KTx 14 subfamily. Post-translationally, contains 3 disulfide bridges. In terms of tissue distribution, expressed by the venom gland.

The protein resides in the secreted. Its function is as follows. Potential blocker of potassium channels. The polypeptide is Potassium channel toxin alpha-KTx 14.3 (Olivierus martensii (Manchurian scorpion)).